Consider the following 228-residue polypeptide: Large ribosomal subunit protein uL3 (228 aa).

Belongs to the universal ribosomal protein uL3 family. In terms of assembly, part of the 50S ribosomal subunit. Forms a cluster with proteins L14 and L19.

One of the primary rRNA binding proteins, it binds directly near the 3'-end of the 23S rRNA, where it nucleates assembly of the 50S subunit. The chain is Large ribosomal subunit protein uL3 from Leuconostoc mesenteroides subsp. mesenteroides (strain ATCC 8293 / DSM 20343 / BCRC 11652 / CCM 1803 / JCM 6124 / NCDO 523 / NBRC 100496 / NCIMB 8023 / NCTC 12954 / NRRL B-1118 / 37Y).